The following is a 358-amino-acid chain: UDP-N-acetylglucosamine--N-acetylmuramyl-(pentapeptide) pyrophosphoryl-undecaprenol N-acetylglucosamine transferase (358 aa).

3 residues coordinate UDP-N-acetyl-alpha-D-glucosamine: arginine 166, serine 196, and glutamine 291.

Belongs to the glycosyltransferase 28 family. MurG subfamily.

It is found in the cell membrane. It carries out the reaction Mur2Ac(oyl-L-Ala-gamma-D-Glu-L-Lys-D-Ala-D-Ala)-di-trans,octa-cis-undecaprenyl diphosphate + UDP-N-acetyl-alpha-D-glucosamine = beta-D-GlcNAc-(1-&gt;4)-Mur2Ac(oyl-L-Ala-gamma-D-Glu-L-Lys-D-Ala-D-Ala)-di-trans,octa-cis-undecaprenyl diphosphate + UDP + H(+). Its pathway is cell wall biogenesis; peptidoglycan biosynthesis. Its function is as follows. Cell wall formation. Catalyzes the transfer of a GlcNAc subunit on undecaprenyl-pyrophosphoryl-MurNAc-pentapeptide (lipid intermediate I) to form undecaprenyl-pyrophosphoryl-MurNAc-(pentapeptide)GlcNAc (lipid intermediate II). The polypeptide is UDP-N-acetylglucosamine--N-acetylmuramyl-(pentapeptide) pyrophosphoryl-undecaprenol N-acetylglucosamine transferase (Staphylococcus saprophyticus subsp. saprophyticus (strain ATCC 15305 / DSM 20229 / NCIMB 8711 / NCTC 7292 / S-41)).